The sequence spans 165 residues: Thiol peroxidase (165 aa).

The Thioredoxin domain maps to 18-164 (RKVGDKAPNF…YEAAIEAAKK (147 aa)). The Cysteine sulfenic acid (-SOH) intermediate role is filled by Cys-60. Cys-60 and Cys-94 are joined by a disulfide.

It belongs to the peroxiredoxin family. Tpx subfamily. As to quaternary structure, homodimer.

The enzyme catalyses a hydroperoxide + [thioredoxin]-dithiol = an alcohol + [thioredoxin]-disulfide + H2O. In terms of biological role, thiol-specific peroxidase that catalyzes the reduction of hydrogen peroxide and organic hydroperoxides to water and alcohols, respectively. Plays a role in cell protection against oxidative stress by detoxifying peroxides. This chain is Thiol peroxidase, found in Listeria innocua serovar 6a (strain ATCC BAA-680 / CLIP 11262).